The primary structure comprises 704 residues: MNNVLSTNIAGKEMKVEFGKIGMLSNAATFMSYGDTVILTNVNASSEPRVGIDFFPLSVEYEERLYAVGKIPGGFIKREGRPSEKAILNGRAVDRTLRPLFPKGYRNDVQVVCTVVSVEKDNLPEILAINAASMALCLSSIPFTIPVAAVQVGLIDNNFIVNPNATEREESTLHLTVCATKERVMMIEAGGNEIPEDIMIDAIKFGFDECQKIINFQEEAVSKFGKEKDVPTLFTVDEEVEKDIKEFASDMIKEAMYITDKDERNAAIDAVNQKVKEEFGEKYEDKFGDIKEVLYNMQKKVVRHMLLKDKRRPDGRAFDEVRPLGCEIGLLPRTHGTGLFTRGLTQVMTVATLGAVGDIQILDGIDEAQSKRYMHHYNFPGYSVGEVKPLRGPGRREIGHGALAERALEPLIPSEEEFPYTIRLVSEVLSSNGSTSQASVCGSTLALLDAGVPLKRPAAGIAMGLITSEDLSEEQVLTDIQGIEDFFGDMDFKVAGTTEGITSIQVDTKLKGFSFNVVENAIRDARKARMTILDKINECISSPREDVSLYAPKTETIQIDPDKIRSVIGAGGKVINKIIQDTGVKIDIKEDGSVFVSSSDHAGVKEAIKIIEGLTKDVKAGEIYLGKVTKITTFGAFVEILPNKEGLVHISKLDKERVNKVEDVVSVGDEILVKVTEIDSQGRINLSRKDVLLDQENKENKEEK.

Asp-485 and Asp-491 together coordinate Mg(2+). A KH domain is found at 552 to 611 (PKTETIQIDPDKIRSVIGAGGKVINKIIQDTGVKIDIKEDGSVFVSSSDHAGVKEAIKII). The region spanning 621–689 (GEIYLGKVTK…SQGRINLSRK (69 aa)) is the S1 motif domain.

It belongs to the polyribonucleotide nucleotidyltransferase family. The cofactor is Mg(2+).

It is found in the cytoplasm. It catalyses the reaction RNA(n+1) + phosphate = RNA(n) + a ribonucleoside 5'-diphosphate. Functionally, involved in mRNA degradation. Catalyzes the phosphorolysis of single-stranded polyribonucleotides processively in the 3'- to 5'-direction. The sequence is that of Polyribonucleotide nucleotidyltransferase from Clostridium botulinum (strain Eklund 17B / Type B).